The following is an 851-amino-acid chain: Molybdenum cofactor sulfurase (851 aa).

Position 249 is an N6-(pyridoxal phosphate)lysine (Lys-249). Residue Cys-413 is part of the active site. The 180-residue stretch at 665–844 (QYLRKFVMPG…LMVGDIVTPS (180 aa)) folds into the MOSC domain.

The protein belongs to the class-V pyridoxal-phosphate-dependent aminotransferase family. MOCOS subfamily. Requires pyridoxal 5'-phosphate as cofactor.

The catalysed reaction is Mo-molybdopterin + L-cysteine + AH2 = thio-Mo-molybdopterin + L-alanine + A + H2O. Its pathway is cofactor biosynthesis; molybdopterin biosynthesis. In terms of biological role, sulfurates the molybdenum cofactor. Sulfation of molybdenum is essential for xanthine dehydrogenase (XDH) and aldehyde oxidase (ADO) enzymes in which molybdenum cofactor is liganded by 1 oxygen and 1 sulfur atom in active form. The polypeptide is Molybdenum cofactor sulfurase (Neosartorya fischeri (strain ATCC 1020 / DSM 3700 / CBS 544.65 / FGSC A1164 / JCM 1740 / NRRL 181 / WB 181) (Aspergillus fischerianus)).